The primary structure comprises 242 residues: Ribosomal RNA small subunit methyltransferase G (242 aa).

Residues G79, F84, 130–131 (AE), and R150 contribute to the S-adenosyl-L-methionine site.

Belongs to the methyltransferase superfamily. RNA methyltransferase RsmG family.

It localises to the cytoplasm. Its function is as follows. Specifically methylates the N7 position of a guanine in 16S rRNA. The protein is Ribosomal RNA small subunit methyltransferase G of Levilactobacillus brevis (strain ATCC 367 / BCRC 12310 / CIP 105137 / JCM 1170 / LMG 11437 / NCIMB 947 / NCTC 947) (Lactobacillus brevis).